The primary structure comprises 32 residues: Photosystem I reaction center subunit XII (32 aa).

The helical transmembrane segment at 4–26 threads the bilayer; that stretch reads ISDSQIIVILLSVFITSILALRL.

This sequence belongs to the PsaM family.

The protein localises to the plastid. It localises to the chloroplast thylakoid membrane. This chain is Photosystem I reaction center subunit XII, found in Marchantia polymorpha (Common liverwort).